A 621-amino-acid chain; its full sequence is Exonuclease 3'-5' domain-containing protein 2 (621 aa).

Topologically, residues 1-4 (MSRQ) are mitochondrial intermembrane. Residues 5 to 25 (NLVALTVTTLLGVAVGGFVLW) form a helical membrane-spanning segment. Over 26–621 (KGIQRRRRSK…FGEDLPIQLS (596 aa)) the chain is Cytoplasmic. The disordered stretch occupies residues 34 to 68 (SKTSPVTQQPQQKVLGSRELPPPEDDQLHSSAPRS). Over residues 36 to 47 (TSPVTQQPQQKV) the composition is skewed to polar residues. A divalent metal cation-binding residues include aspartate 108, glutamate 110, and aspartate 246. Residues 155 to 247 (ILADGTILKV…DQVIYAARDA (93 aa)) form the 3'-5' exonuclease domain. The disordered stretch occupies residues 299 to 343 (RLGEEVNGEATESQQKPRNKKSKMDGMVPGNHQGRDPRKHKRKPL).

Belongs to the EXD2 family. Homodimer. Interacts with RBBP8, MRE11 and BRCA1. Mg(2+) serves as cofactor. Requires Mn(2+) as cofactor.

The protein resides in the mitochondrion outer membrane. It is found in the mitochondrion matrix. Its subcellular location is the nucleus. It localises to the chromosome. It catalyses the reaction Exonucleolytic cleavage in the 3'- to 5'-direction to yield nucleoside 5'-phosphates.. Functionally, exonuclease that has both 3'-5' exoribonuclease and exodeoxyribonuclease activities, depending on the divalent metal cation used as cofactor. In presence of Mg(2+), only shows 3'-5' exoribonuclease activity, while it shows both exoribonuclease and exodeoxyribonuclease activities in presence of Mn(2+). Acts as an exoribonuclease in mitochondrion, possibly by regulating ATP production and mitochondrial translation. Also involved in the response to DNA damage. Acts as 3'-5' exodeoxyribonuclease for double-strand breaks resection and efficient homologous recombination. Plays a key role in controlling the initial steps of chromosomal break repair, it is recruited to chromatin in a damage-dependent manner and functionally interacts with the MRN complex to accelerate resection through its 3'-5' exonuclease activity, which efficiently processes double-stranded DNA substrates containing nicks. Also involved in response to replicative stress: recruited to stalled forks and is required to stabilize and restart stalled replication forks by restraining excessive fork regression, thereby suppressing their degradation. This chain is Exonuclease 3'-5' domain-containing protein 2, found in Homo sapiens (Human).